The sequence spans 88 residues: Small ribosomal subunit protein bS16c (88 aa).

Belongs to the bacterial ribosomal protein bS16 family.

The protein resides in the plastid. Its subcellular location is the chloroplast. This Citrus sinensis (Sweet orange) protein is Small ribosomal subunit protein bS16c.